The chain runs to 60 residues: Large ribosomal subunit protein bL32 (60 aa).

The interval 1–22 is disordered; the sequence is MAVPARHTSKAKKNKRRTHYKL. The span at 7-20 shows a compositional bias: basic residues; the sequence is HTSKAKKNKRRTHY.

Belongs to the bacterial ribosomal protein bL32 family.

This Streptococcus pyogenes serotype M3 (strain ATCC BAA-595 / MGAS315) protein is Large ribosomal subunit protein bL32.